The sequence spans 283 residues: Myeloid differentiation primary response protein MyD88-B (283 aa).

Residues 27–105 form the Death domain; the sequence is RLCLYLNPNA…DILTDLAPLI (79 aa). An intermediate domain region spans residues 106 to 143; it reads EADCKKYLEKKHGPLPLQDDNVDSSEQYRITKSDDPYG. The TIR domain occupies 147–281; that stretch reads ETFDAFICCC…WFWDKLAKAL (135 aa).

It is found in the cytoplasm. Functionally, adapter protein involved in the Toll-like receptor and IL-1 receptor signaling pathway in the innate immune response. Activates expression of target genes in the Spemann organizer region during early embryonic development. Is required for normal axis formation. This chain is Myeloid differentiation primary response protein MyD88-B (myd88-b), found in Xenopus laevis (African clawed frog).